A 373-amino-acid chain; its full sequence is Leucoanthocyanidin dioxygenase 2 (373 aa).

Residues 216–315 (LLLQLKINYY…RVSWVVFCEP (100 aa)) form the Fe2OG dioxygenase domain. Fe cation contacts are provided by His-240, Asp-242, and His-296. Position 306 (Arg-306) interacts with 2-oxoglutarate.

It belongs to the iron/ascorbate-dependent oxidoreductase family. It depends on L-ascorbate as a cofactor. The cofactor is Fe(2+).

The catalysed reaction is a (2R,3S,4S)-leucoanthocyanidin + 2-oxoglutarate + O2 = a 4-H-anthocyanidin with a 3-hydroxy group + succinate + CO2 + 2 H2O. It functions in the pathway pigment biosynthesis; anthocyanin biosynthesis. Its function is as follows. Involved in anthocyanin and protoanthocyanidin biosynthesis by catalyzing the oxidation of leucoanthocyanidins into anthocyanidins. The protein is Leucoanthocyanidin dioxygenase 2 of Oryza sativa subsp. japonica (Rice).